The following is a 499-amino-acid chain: Glutamyl-tRNA(Gln) amidotransferase subunit A (499 aa).

Residues lysine 79 and serine 159 each act as charge relay system in the active site. Catalysis depends on serine 183, which acts as the Acyl-ester intermediate.

It belongs to the amidase family. GatA subfamily. As to quaternary structure, heterotrimer of A, B and C subunits.

The enzyme catalyses L-glutamyl-tRNA(Gln) + L-glutamine + ATP + H2O = L-glutaminyl-tRNA(Gln) + L-glutamate + ADP + phosphate + H(+). In terms of biological role, allows the formation of correctly charged Gln-tRNA(Gln) through the transamidation of misacylated Glu-tRNA(Gln) in organisms which lack glutaminyl-tRNA synthetase. The reaction takes place in the presence of glutamine and ATP through an activated gamma-phospho-Glu-tRNA(Gln). This Granulibacter bethesdensis (strain ATCC BAA-1260 / CGDNIH1) protein is Glutamyl-tRNA(Gln) amidotransferase subunit A.